Reading from the N-terminus, the 382-residue chain is 1-deoxy-D-xylulose 5-phosphate reductoisomerase (382 aa).

Residues threonine 10, glycine 11, serine 12, isoleucine 13, glycine 36, and asparagine 122 each contribute to the NADPH site. Lysine 123 is a 1-deoxy-D-xylulose 5-phosphate binding site. Glutamate 124 is a binding site for NADPH. A Mn(2+)-binding site is contributed by aspartate 148. 1-deoxy-D-xylulose 5-phosphate-binding residues include serine 149, glutamate 150, serine 174, and histidine 197. Glutamate 150 is a Mn(2+) binding site. Glycine 203 lines the NADPH pocket. 4 residues coordinate 1-deoxy-D-xylulose 5-phosphate: serine 210, asparagine 215, lysine 216, and glutamate 219. Glutamate 219 contributes to the Mn(2+) binding site.

This sequence belongs to the DXR family. Mg(2+) is required as a cofactor. The cofactor is Mn(2+).

The catalysed reaction is 2-C-methyl-D-erythritol 4-phosphate + NADP(+) = 1-deoxy-D-xylulose 5-phosphate + NADPH + H(+). The protein operates within isoprenoid biosynthesis; isopentenyl diphosphate biosynthesis via DXP pathway; isopentenyl diphosphate from 1-deoxy-D-xylulose 5-phosphate: step 1/6. Catalyzes the NADPH-dependent rearrangement and reduction of 1-deoxy-D-xylulose-5-phosphate (DXP) to 2-C-methyl-D-erythritol 4-phosphate (MEP). This chain is 1-deoxy-D-xylulose 5-phosphate reductoisomerase, found in Chlorobium limicola (strain DSM 245 / NBRC 103803 / 6330).